The following is a 521-amino-acid chain: UDP-N-acetylmuramate--L-alanine ligase (521 aa).

136–142 (GAHGKTT) lines the ATP pocket.

It belongs to the MurCDEF family.

Its subcellular location is the cytoplasm. The enzyme catalyses UDP-N-acetyl-alpha-D-muramate + L-alanine + ATP = UDP-N-acetyl-alpha-D-muramoyl-L-alanine + ADP + phosphate + H(+). It participates in cell wall biogenesis; peptidoglycan biosynthesis. Cell wall formation. The chain is UDP-N-acetylmuramate--L-alanine ligase from Bifidobacterium adolescentis (strain ATCC 15703 / DSM 20083 / NCTC 11814 / E194a).